The chain runs to 129 residues: Putative membrane protein insertion efficiency factor (129 aa).

This sequence belongs to the UPF0161 family.

Its subcellular location is the cell inner membrane. Its function is as follows. Could be involved in insertion of integral membrane proteins into the membrane. The sequence is that of Putative membrane protein insertion efficiency factor from Rhodopseudomonas palustris (strain TIE-1).